We begin with the raw amino-acid sequence, 101 residues long: Putative septation protein SpoVG (101 aa).

The disordered stretch occupies residues 82-101 (ELKKGGAAPARATGTDPHED).

The protein belongs to the SpoVG family.

Functionally, could be involved in septation. This Anaeromyxobacter dehalogenans (strain 2CP-1 / ATCC BAA-258) protein is Putative septation protein SpoVG.